Consider the following 755-residue polypeptide: Polyribonucleotide nucleotidyltransferase (755 aa).

The Mg(2+) site is built by Asp493 and Asp499. Residues 560–619 (PRIMTIQIPVDKIGALIGPGGKTIRNICDTTGAQIDIEDDGRVFITAPDGEAAKKAISMI) enclose the KH domain. In terms of domain architecture, S1 motif spans 629 to 698 (GDIFLGKVVS…NTGKISLSRR (70 aa)). The disordered stretch occupies residues 704–755 (ETPEARKAAGAAPRPRPREEQRGGREEPRSLREELRGPRRDGERPRPRRRDD). A compositionally biased stretch (basic and acidic residues) spans 719–755 (RPREEQRGGREEPRSLREELRGPRRDGERPRPRRRDD).

Belongs to the polyribonucleotide nucleotidyltransferase family. Requires Mg(2+) as cofactor.

It localises to the cytoplasm. It carries out the reaction RNA(n+1) + phosphate = RNA(n) + a ribonucleoside 5'-diphosphate. Functionally, involved in mRNA degradation. Catalyzes the phosphorolysis of single-stranded polyribonucleotides processively in the 3'- to 5'-direction. This chain is Polyribonucleotide nucleotidyltransferase, found in Chloroflexus aggregans (strain MD-66 / DSM 9485).